Here is a 196-residue protein sequence, read N- to C-terminus: Pyridoxal 5'-phosphate synthase subunit PdxT (196 aa).

47–49 lines the L-glutamine pocket; it reads GES. C79 acts as the Nucleophile in catalysis. Residues R106 and 134 to 135 contribute to the L-glutamine site; that span reads IR. Catalysis depends on charge relay system residues H170 and E172.

Belongs to the glutaminase PdxT/SNO family. In terms of assembly, in the presence of PdxS, forms a dodecamer of heterodimers. Only shows activity in the heterodimer.

The enzyme catalyses aldehydo-D-ribose 5-phosphate + D-glyceraldehyde 3-phosphate + L-glutamine = pyridoxal 5'-phosphate + L-glutamate + phosphate + 3 H2O + H(+). It catalyses the reaction L-glutamine + H2O = L-glutamate + NH4(+). Its pathway is cofactor biosynthesis; pyridoxal 5'-phosphate biosynthesis. Its function is as follows. Catalyzes the hydrolysis of glutamine to glutamate and ammonia as part of the biosynthesis of pyridoxal 5'-phosphate. The resulting ammonia molecule is channeled to the active site of PdxS. In Bacillus anthracis (strain A0248), this protein is Pyridoxal 5'-phosphate synthase subunit PdxT.